We begin with the raw amino-acid sequence, 252 residues long: Phosphate import ATP-binding protein PstB 1 (252 aa).

One can recognise an ABC transporter domain in the interval L6–I247. An ATP-binding site is contributed by G38–S45.

It belongs to the ABC transporter superfamily. Phosphate importer (TC 3.A.1.7) family. In terms of assembly, the complex is composed of two ATP-binding proteins (PstB), two transmembrane proteins (PstC and PstA) and a solute-binding protein (PstS).

It is found in the cell membrane. It catalyses the reaction phosphate(out) + ATP + H2O = ADP + 2 phosphate(in) + H(+). Its function is as follows. Part of the ABC transporter complex PstSACB involved in phosphate import. Responsible for energy coupling to the transport system. In Streptococcus pyogenes serotype M6 (strain ATCC BAA-946 / MGAS10394), this protein is Phosphate import ATP-binding protein PstB 1.